A 338-amino-acid polypeptide reads, in one-letter code: (-)-alpha-amorphene synthase ((2E,6E)-farnesyl diphosphate cyclizing) (338 aa).

Mg(2+) is bound by residues Asp105 and Glu109. The DDXXE motif motif lies at 105–109; sequence DDRAE. Arg196 provides a ligand contact to substrate. Residue Ser246 coordinates Mg(2+). Substrate is bound at residue Lys249. Residue Glu250 participates in Mg(2+) binding. 327–328 contributes to the substrate binding site; that stretch reads RY.

It belongs to the terpene synthase family. Requires Mg(2+) as cofactor.

It carries out the reaction (2E,6E)-farnesyl diphosphate = (-)-alpha-amorphene + diphosphate. It participates in secondary metabolite biosynthesis; terpenoid biosynthesis. Functionally, catalyzes the conversion of (2E,6E)-farnesyl diphosphate (FPP) to yield the bicyclic sesquiterpene (1R,6S,7S)-(-)-alpha-amorphene via a probable 1,6-cyclization, which could involve the abstraction of the pyrophosphate from FPP to yield a (R)-bisabolyl cation. The only accepted substrate is (2E,6E)-farnesyl diphosphate (FPP). This chain is (-)-alpha-amorphene synthase ((2E,6E)-farnesyl diphosphate cyclizing), found in Streptomyces viridochromogenes (strain DSM 40736 / JCM 4977 / BCRC 1201 / Tue 494).